A 382-amino-acid polypeptide reads, in one-letter code: V-type proton ATPase subunit C 1 (382 aa).

Thr2 carries the N-acetylthreonine modification.

Belongs to the V-ATPase C subunit family. As to quaternary structure, V-ATPase is a heteromultimeric enzyme made up of two complexes: the ATP-hydrolytic V1 complex and the proton translocation V0 complex. The V1 complex consists of three catalytic AB heterodimers that form a heterohexamer, three peripheral stalks each consisting of EG heterodimers, one central rotor including subunits D and F, and the regulatory subunits C and H. The proton translocation complex V0 consists of the proton transport subunit a, a ring of proteolipid subunits c9c'', rotary subunit d, subunits e and f, and two accessory subunits.

Subunit of the V1 complex of vacuolar(H+)-ATPase (V-ATPase), a multisubunit enzyme composed of a peripheral complex (V1) that hydrolyzes ATP and a membrane integral complex (V0) that translocates protons. V-ATPase is responsible for acidifying and maintaining the pH of intracellular compartments and in some cell types, is targeted to the plasma membrane, where it is responsible for acidifying the extracellular environment. Subunit C is necessary for the assembly of the catalytic sector of the enzyme and is likely to have a specific function in its catalytic activity. In Xenopus laevis (African clawed frog), this protein is V-type proton ATPase subunit C 1 (atp6v1c1).